We begin with the raw amino-acid sequence, 394 residues long: Short-chain dehydrogenase/reductase family 42E member 1 (394 aa).

Tyr-153 serves as the catalytic Proton acceptor. Position 157 (Lys-157) interacts with NAD(+). 2 consecutive transmembrane segments (helical) span residues 283–303 and 367–387; these read LPLT…FIVG and FMLW…TWIL.

Belongs to the 3-beta-HSD family.

It is found in the membrane. This is Short-chain dehydrogenase/reductase family 42E member 1 (Sdr42e1) from Mus musculus (Mouse).